Consider the following 874-residue polypeptide: Alanine--tRNA ligase (874 aa).

The Zn(2+) site is built by His-564, His-568, Cys-665, and His-669.

Belongs to the class-II aminoacyl-tRNA synthetase family. Zn(2+) serves as cofactor.

It localises to the cytoplasm. It catalyses the reaction tRNA(Ala) + L-alanine + ATP = L-alanyl-tRNA(Ala) + AMP + diphosphate. Functionally, catalyzes the attachment of alanine to tRNA(Ala) in a two-step reaction: alanine is first activated by ATP to form Ala-AMP and then transferred to the acceptor end of tRNA(Ala). Also edits incorrectly charged Ser-tRNA(Ala) and Gly-tRNA(Ala) via its editing domain. In Burkholderia orbicola (strain MC0-3), this protein is Alanine--tRNA ligase.